The sequence spans 311 residues: Iron-binding protein YfeA (311 aa).

A signal peptide spans 1-31; sequence MIERLNSPFLRAAALFTIVAFSSLISTAALA. Residues His-76, His-141, Glu-207, and Asp-282 each contribute to the Fe(2+) site.

This sequence belongs to the bacterial solute-binding protein 9 family. In terms of assembly, monomer.

Its subcellular location is the periplasm. Functionally, part of the ATP-binding cassette (ABC) transport system YfeABC involved in iron import. Binds iron with high affinity and specificity and delivers it to the membrane permease for translocation into the cytoplasm. Also binds Mn(2+) and Zn(2+). This is Iron-binding protein YfeA (yfeA) from Yersinia pestis.